Consider the following 99-residue polypeptide: UPF0235 protein PM1313 (99 aa).

This sequence belongs to the UPF0235 family.

The chain is UPF0235 protein PM1313 from Pasteurella multocida (strain Pm70).